The chain runs to 302 residues: Epoxyqueuosine reductase (302 aa).

D128 serves as the catalytic Proton donor. The region spanning 170 to 202 is the 4Fe-4S ferredoxin-type 1 domain; that stretch reads LPLQADGPIRDYCGTCTACIDACPTDAITPYEV. [4Fe-4S] cluster is bound by residues C182, C185, C188, C192, C207, C234, C237, and C241. Positions 221-251 constitute a 4Fe-4S ferredoxin-type 2 domain; the sequence is NEFKGKMENWIFGCDICQDVCPWNSFARPHS.

Belongs to the QueG family. Monomer. Cob(II)alamin is required as a cofactor. [4Fe-4S] cluster serves as cofactor.

The protein localises to the cytoplasm. The enzyme catalyses epoxyqueuosine(34) in tRNA + AH2 = queuosine(34) in tRNA + A + H2O. Its pathway is tRNA modification; tRNA-queuosine biosynthesis. In terms of biological role, catalyzes the conversion of epoxyqueuosine (oQ) to queuosine (Q), which is a hypermodified base found in the wobble positions of tRNA(Asp), tRNA(Asn), tRNA(His) and tRNA(Tyr). This Leadbetterella byssophila (strain DSM 17132 / JCM 16389 / KACC 11308 / NBRC 106382 / 4M15) protein is Epoxyqueuosine reductase.